Consider the following 516-residue polypeptide: Exodeoxyribonuclease 7 large subunit (516 aa).

The protein belongs to the XseA family. In terms of assembly, heterooligomer composed of large and small subunits.

It is found in the cytoplasm. It carries out the reaction Exonucleolytic cleavage in either 5'- to 3'- or 3'- to 5'-direction to yield nucleoside 5'-phosphates.. Functionally, bidirectionally degrades single-stranded DNA into large acid-insoluble oligonucleotides, which are then degraded further into small acid-soluble oligonucleotides. This is Exodeoxyribonuclease 7 large subunit from Chlamydia trachomatis serovar A (strain ATCC VR-571B / DSM 19440 / HAR-13).